Reading from the N-terminus, the 155-residue chain is Interleukin-2 (155 aa).

The first 20 residues, 1–20 (MYKMQLLSCIALTLVLVANS), serve as a signal peptide directing secretion. Residue threonine 23 is glycosylated (O-linked (GalNAc...) threonine). An intrachain disulfide couples cysteine 79 to cysteine 127.

The protein belongs to the IL-2 family.

The protein resides in the secreted. In terms of biological role, cytokine produced by activated CD4-positive helper T-cells and to a lesser extend activated CD8-positive T-cells and natural killer (NK) cells that plays pivotal roles in the immune response and tolerance. Binds to a receptor complex composed of either the high-affinity trimeric IL-2R (IL2RA/CD25, IL2RB/CD122 and IL2RG/CD132) or the low-affinity dimeric IL-2R (IL2RB and IL2RG). Interaction with the receptor leads to oligomerization and conformation changes in the IL-2R subunits resulting in downstream signaling starting with phosphorylation of JAK1 and JAK3. In turn, JAK1 and JAK3 phosphorylate the receptor to form a docking site leading to the phosphorylation of several substrates including STAT5. This process leads to activation of several pathways including STAT, phosphoinositide-3-kinase/PI3K and mitogen-activated protein kinase/MAPK pathways. Functions as a T-cell growth factor and can increase NK-cell cytolytic activity as well. Promotes strong proliferation of activated B-cells and subsequently immunoglobulin production. Plays a pivotal role in regulating the adaptive immune system by controlling the survival and proliferation of regulatory T-cells, which are required for the maintenance of immune tolerance. Moreover, participates in the differentiation and homeostasis of effector T-cell subsets, including Th1, Th2, Th17 as well as memory CD8-positive T-cells. The sequence is that of Interleukin-2 (IL2) from Halichoerus grypus (Gray seal).